The primary structure comprises 299 residues: Bifunctional protein FolD (299 aa).

NADP(+) contacts are provided by residues 166–168, Ser191, and Ile232; that span reads GRS.

It belongs to the tetrahydrofolate dehydrogenase/cyclohydrolase family. As to quaternary structure, homodimer.

The catalysed reaction is (6R)-5,10-methylene-5,6,7,8-tetrahydrofolate + NADP(+) = (6R)-5,10-methenyltetrahydrofolate + NADPH. It catalyses the reaction (6R)-5,10-methenyltetrahydrofolate + H2O = (6R)-10-formyltetrahydrofolate + H(+). The protein operates within one-carbon metabolism; tetrahydrofolate interconversion. Catalyzes the oxidation of 5,10-methylenetetrahydrofolate to 5,10-methenyltetrahydrofolate and then the hydrolysis of 5,10-methenyltetrahydrofolate to 10-formyltetrahydrofolate. This Dinoroseobacter shibae (strain DSM 16493 / NCIMB 14021 / DFL 12) protein is Bifunctional protein FolD.